A 701-amino-acid polypeptide reads, in one-letter code: Polyribonucleotide nucleotidyltransferase (701 aa).

Mg(2+)-binding residues include Asp485 and Asp491. In terms of domain architecture, KH spans 552–611 (PKIFKTTVDPEKIRDIIGPGGKMINKIIAKTNVKIDIEPDGRIFVAAPDDISGNRAISMI). Positions 621-689 (GQFFLGKVTR…RLGRIALSRK (69 aa)) constitute an S1 motif domain.

This sequence belongs to the polyribonucleotide nucleotidyltransferase family. It depends on Mg(2+) as a cofactor.

It is found in the cytoplasm. The enzyme catalyses RNA(n+1) + phosphate = RNA(n) + a ribonucleoside 5'-diphosphate. Functionally, involved in mRNA degradation. Catalyzes the phosphorolysis of single-stranded polyribonucleotides processively in the 3'- to 5'-direction. The chain is Polyribonucleotide nucleotidyltransferase from Caldicellulosiruptor saccharolyticus (strain ATCC 43494 / DSM 8903 / Tp8T 6331).